Consider the following 207-residue polypeptide: Large ribosomal subunit protein uL4 (207 aa).

Positions 50 to 76 (AVKNRSAVSGGGRKPWKQKGTGRARQG) are disordered.

This sequence belongs to the universal ribosomal protein uL4 family. As to quaternary structure, part of the 50S ribosomal subunit.

In terms of biological role, one of the primary rRNA binding proteins, this protein initially binds near the 5'-end of the 23S rRNA. It is important during the early stages of 50S assembly. It makes multiple contacts with different domains of the 23S rRNA in the assembled 50S subunit and ribosome. Functionally, forms part of the polypeptide exit tunnel. The sequence is that of Large ribosomal subunit protein uL4 from Macrococcus caseolyticus (strain JCSC5402) (Macrococcoides caseolyticum).